Consider the following 567-residue polypeptide: Periplasmic [NiFe] hydrogenase large subunit (567 aa).

E62 lines the Mg(2+) pocket. The Ni(2+) site is built by C81 and C84. Fe cation is bound at residue C84. Residue L498 participates in Mg(2+) binding. The Ni(2+) site is built by C546 and C549. C549 serves as a coordination point for Fe cation. Position 552 (H552) interacts with Mg(2+). Residues 553 to 567 constitute a propeptide that is removed on maturation; the sequence is VIDGHTNEVHKFRIL.

This sequence belongs to the [NiFe]/[NiFeSe] hydrogenase large subunit family. As to quaternary structure, heterodimer of a large and a small subunit. Requires Ni(2+) as cofactor. Fe cation serves as cofactor.

The protein localises to the periplasm. It catalyses the reaction 2 Fe(III)-[cytochrome c3] + H2 = 2 Fe(II)-[cytochrome c3] + 2 H(+). Functionally, catalyzes the reversible oxidoreduction of molecular hydrogen, in conjunction with a specific electron acceptor, cytochrome c3. The sequence is that of Periplasmic [NiFe] hydrogenase large subunit (hydB) from Nitratidesulfovibrio vulgaris (strain DSM 19637 / Miyazaki F) (Desulfovibrio vulgaris).